Consider the following 73-residue polypeptide: Mauriporin (73 aa).

Positions 1 to 22 are cleaved as a signal peptide; that stretch reads MNKKTLLVIFFITMLIVDEVNS.

Belongs to the non-disulfide-bridged peptide (NDBP) superfamily. Long chain multifunctional peptide (group 2) family. In terms of tissue distribution, expressed by the venom gland.

The protein localises to the secreted. The protein resides in the target cell membrane. In terms of biological role, amphipathic peptide that displays potent antimicrobial activities against a range of Gram-positive and Gram-negative planktonic bacteria with MIC values in the range 5 uM to 10 uM. In more details, it is active on Listeria ivanovii (MIC=5 uM), Staphylococcus epidermidis (MIC=10 uM), Salmonella enterica (MIC=5 uM), Pseudomonas aeruginosa (ATCC 27853) (MIC=5 uM), Acinetobacter baumannii (MIC=5 uM), Klebsiella pneumoniae (MIC=5 uM), Escherichia coli (MIC=7.5 uM), Salmonella typhimurium (MIC=7.5 uM), Pseudomonas aeruginosa (ATCC 9027) (MIC=10 uM). Is also able to prevent P.aeruginosa biofilm formation while showing weak hemolytic activity towards human erythrocytes. Probably induces bacterial cell death through membrane permeabilization. Moreover, shows DNA-binding activities. Also exerts potent selective cytotoxic and antiproliferative activity against three different prostate cancer cell lines (IC(50)=4.4-7.8 uM), compared to non-tumorigenic cell lines (IC(50)=59.7 uM in Vero and 62.5 uM in HUVEC cells). This peptide possibly exerts its cytotoxic activity through a necrotic mode of cell death. Only shows diminished hemolytic activity against sheep erythrocytes. Does not induce cell death through apoptosis and consequently is not acting upon an intracellular target. The protein is Mauriporin of Androctonus mauritanicus (Fat-tailed scorpion).